The sequence spans 261 residues: MIVKTRAVILREIKYRDQSKICSIYTREFGKMSIIIKGARNPKNRLSGLFSAGNVVDLVLYKKSSRDIQLATDGNLVLSPMVPEPDLERFAILYRIIDFVRHTTENDEKNLPLFTLLTGTLEQLYHTNVNFQQLYAWFLLRFVSLLGFQPSLRTCVFSGEELLPAIEALQLTELYFVMNPGGLALPKAAGSSLAKKQLIPVRLAMLLSALAATRLPAGDSIKADPREIEDLWNLLQEYCSLHLEHARGRKNLDIVSQILLK.

It belongs to the RecO family.

Functionally, involved in DNA repair and RecF pathway recombination. The sequence is that of DNA repair protein RecO from Pelodictyon phaeoclathratiforme (strain DSM 5477 / BU-1).